A 1615-amino-acid chain; its full sequence is ABC transporter A family member 4 (1615 aa).

Transmembrane regions (helical) follow at residues 30–50, 233–253, 278–298, 308–328, 337–357, 365–385, and 405–425; these read ILLPLISIGILFGILYLSMII, GVFITASLFATLFTLITNIVI, SIISLITLLSSTLLVSIILSA, ITLILILIPYSITLLLIAFIL, YAGLMAFLIVLLLSGIGIIIG, LKLLSCLFSPIAISVANYVWC, and YEIIGMLVFDIFLYILILWYL. The region spanning 182–383 is the ABC transmembrane type-2 domain; sequence TQIQTGVDQA…PIAISVANYV (202 aa). The 236-residue stretch at 492–727 folds into the ABC transporter 1 domain; the sequence is ISIRNLRKEF…FGVGYLLTIS (236 aa). 528 to 535 contributes to the ATP binding site; that stretch reads GPNGSGKS. 7 helical membrane-spanning segments follow: residues 855–875, 1022–1042, 1075–1095, 1106–1126, 1135–1155, 1174–1194, and 1218–1238; these read IKSFVLSILIPILILAGGLIL, FVAIVFFIILTLASFSLIAAS, IWDYLQTFILVIFLTIVIIAV, YISGVVLFTFSIIPLSYLMSF, VGAIFAIHFGVGLIFTVISFI, IIEYCFYAISPFFCFSKILAI, and LLPNAILFLHCIVWITWILLI. The ABC transporter 2 domain maps to 1293–1528; that stretch reads IIFNNLYKKF…FGSGYSIEVK (236 aa). Position 1331–1338 (1331–1338) interacts with ATP; that stretch reads GLNGCGKS.

This sequence belongs to the ABC transporter superfamily. ABCA family.

It is found in the membrane. This chain is ABC transporter A family member 4 (abcA4), found in Dictyostelium discoideum (Social amoeba).